The primary structure comprises 584 residues: Alkaline nuclease (584 aa).

Positions 409–430 (GGGADHHLRGSPGDSPPPIPFE) are disordered.

This sequence belongs to the herpesviridae alkaline nuclease family. As to quaternary structure, interacts with major DNA-binding protein; this interaction increases the nuclease processivity of the alkaline exonuclease.

Its subcellular location is the host nucleus. It localises to the host cytoplasm. Functionally, plays a role in processing non linear or branched viral DNA intermediates in order to promote the production of mature packaged unit-length linear progeny viral DNA molecules. Exhibits endonuclease and exonuclease activities and accepts both double-stranded and single-stranded DNA as substrate. Exonuclease digestion of DNA is in the 5'-&gt; 3' direction and the products are 5'-monophosphate nucleosides. Additionally, forms a recombinase with the major DNA-binding protein, which displays strand exchange activity. This chain is Alkaline nuclease (UL98), found in Human cytomegalovirus (strain AD169) (HHV-5).